The following is a 168-amino-acid chain: MVKDILAPGLRVVFCGINPGLSSANTGFPFAHPANRFWKVIHLAGFTDRQLKPEEAEKLLDFRCGVTKLVDRPTVQATEVKLHELRSGGRNLIEKIEDYQPAALAVLGKQAFEQGFSQRGIAWGKQKIAIGATMVWVLPNPSGLNRIKTEKLVEAYRELDQALIMSGL.

Belongs to the uracil-DNA glycosylase (UDG) superfamily. TDG/mug family. As to quaternary structure, binds DNA as a monomer.

The protein localises to the cytoplasm. It carries out the reaction Specifically hydrolyzes mismatched double-stranded DNA and polynucleotides, releasing free uracil.. In terms of biological role, excises ethenocytosine and uracil, which can arise by alkylation or deamination of cytosine, respectively, from the corresponding mispairs with guanine in ds-DNA. It is capable of hydrolyzing the carbon-nitrogen bond between the sugar-phosphate backbone of the DNA and the mispaired base. The complementary strand guanine functions in substrate recognition. Required for DNA damage lesion repair in stationary-phase cells. This chain is G/U mismatch-specific DNA glycosylase, found in Salmonella dublin (strain CT_02021853).